A 171-amino-acid chain; its full sequence is Disulfide bond formation protein B (171 aa).

Residues 1–13 (MSALTRFAQSRLA) lie on the Cytoplasmic side of the membrane. The chain crosses the membrane as a helical span at residues 14–30 (WTLLLLTAVGLEACALF). Residues 31–48 (FQHVMKLDPCVMCIYQRL) are Periplasmic-facing. Cys40 and Cys43 are joined by a disulfide. A helical membrane pass occupies residues 49–64 (AVLGVLTAGLIGVVGH). Over 65-71 (QFRLLRF) the chain is Cytoplasmic. Residues 72–89 (LGVLLWGVSAAWGLKLAL) traverse the membrane as a helical segment. The Periplasmic segment spans residues 90–144 (ELVEMQTNPSPFSTCSFLPEFPEWMPLHEWFPSVFLPTGMCTDIPWEMFGITMSQ). A disulfide bridge connects residues Cys104 and Cys130. The helical transmembrane segment at 145-163 (WMVVAFSTYLIALVVFIVP) threads the bilayer. The Cytoplasmic segment spans residues 164–171 (ALMPTKKA).

It belongs to the DsbB family.

The protein localises to the cell inner membrane. Required for disulfide bond formation in some periplasmic proteins. Acts by oxidizing the DsbA protein. This chain is Disulfide bond formation protein B, found in Shewanella loihica (strain ATCC BAA-1088 / PV-4).